The following is a 102-amino-acid chain: Small ribosomal subunit protein uS10 (102 aa).

It belongs to the universal ribosomal protein uS10 family. As to quaternary structure, part of the 30S ribosomal subunit.

Involved in the binding of tRNA to the ribosomes. This chain is Small ribosomal subunit protein uS10, found in Parvibaculum lavamentivorans (strain DS-1 / DSM 13023 / NCIMB 13966).